We begin with the raw amino-acid sequence, 727 residues long: Elongation factor 2 (727 aa).

In terms of domain architecture, tr-type G spans 19 to 260; that stretch reads DQIRNIGICA…MVVTHLPNPV (242 aa). GTP-binding positions include 28–35, 94–98, and 148–151; these read AHIDHGKT, DTPGH, and NKVD. At histidine 603 the chain carries Diphthamide.

The protein belongs to the TRAFAC class translation factor GTPase superfamily. Classic translation factor GTPase family. EF-G/EF-2 subfamily.

It localises to the cytoplasm. Functionally, catalyzes the GTP-dependent ribosomal translocation step during translation elongation. During this step, the ribosome changes from the pre-translocational (PRE) to the post-translocational (POST) state as the newly formed A-site-bound peptidyl-tRNA and P-site-bound deacylated tRNA move to the P and E sites, respectively. Catalyzes the coordinated movement of the two tRNA molecules, the mRNA and conformational changes in the ribosome. This chain is Elongation factor 2, found in Methanococcus aeolicus (strain ATCC BAA-1280 / DSM 17508 / OCM 812 / Nankai-3).